A 429-amino-acid chain; its full sequence is Adenylosuccinate synthetase (429 aa).

GTP contacts are provided by residues 12–18 (GDEGKGK) and 40–42 (GHT). Catalysis depends on D13, which acts as the Proton acceptor. 2 residues coordinate Mg(2+): D13 and G40. IMP-binding positions include 13–16 (DEGK), 38–41 (NAGH), T129, R143, Q223, T238, and R302. H41 functions as the Proton donor in the catalytic mechanism. Residue 298–304 (VVTGRKR) coordinates substrate. GTP-binding positions include R304, 330-332 (KLD), and 412-414 (STS).

This sequence belongs to the adenylosuccinate synthetase family. In terms of assembly, homodimer. The cofactor is Mg(2+).

Its subcellular location is the cytoplasm. The catalysed reaction is IMP + L-aspartate + GTP = N(6)-(1,2-dicarboxyethyl)-AMP + GDP + phosphate + 2 H(+). It participates in purine metabolism; AMP biosynthesis via de novo pathway; AMP from IMP: step 1/2. Functionally, plays an important role in the de novo pathway of purine nucleotide biosynthesis. Catalyzes the first committed step in the biosynthesis of AMP from IMP. This Brucella abortus (strain 2308) protein is Adenylosuccinate synthetase.